The sequence spans 396 residues: MAKAKFERTKPHVNIGTIGHVDHGKTTLTAAISKVLYDKYPDLNEKRDFASIDSAPEERQRGITINISHVEYQTEKRHYAHVDAPGHADYIKNMITGAAQMDGAILVVAATDGPMAQTREHVLLARQVGVPYLLVALNKSDMVDDEELLDLVEMEVRELLSSQGFDGDEAPVVRVSGLKALEGDPVWVKSVEDLMAAVDESVPDPVRDRDKPFLMPIEDVFTITGRGTVVTGRAERGTLAINSEVEIVGIRPVQKTTVTGIEMFHKQLDEAWAGENCGLLLRGLKRDDVERGQVVVKPGSITPHTDFEANVYILSKDEGGRHNPFYSNYRPQFYFRTTDVTGVITLPEGTEMVMPGDNTEMTVALIQPIAMEEGLGFAIREGGRTVGSGRVTKIIK.

The 197-residue stretch at 10 to 206 (KPHVNIGTIG…AVDESVPDPV (197 aa)) folds into the tr-type G domain. Residues 19-26 (GHVDHGKT) are G1. Position 19–26 (19–26 (GHVDHGKT)) interacts with GTP. Thr26 is a Mg(2+) binding site. The G2 stretch occupies residues 62 to 66 (GITIN). The tract at residues 83–86 (DAPG) is G3. GTP contacts are provided by residues 83-87 (DAPGH) and 138-141 (NKSD). The segment at 138 to 141 (NKSD) is G4. The segment at 176–178 (SGL) is G5.

It belongs to the TRAFAC class translation factor GTPase superfamily. Classic translation factor GTPase family. EF-Tu/EF-1A subfamily. As to quaternary structure, monomer.

It localises to the cytoplasm. It catalyses the reaction GTP + H2O = GDP + phosphate + H(+). Its function is as follows. GTP hydrolase that promotes the GTP-dependent binding of aminoacyl-tRNA to the A-site of ribosomes during protein biosynthesis. The chain is Elongation factor Tu from Pseudarthrobacter chlorophenolicus (strain ATCC 700700 / DSM 12829 / CIP 107037 / JCM 12360 / KCTC 9906 / NCIMB 13794 / A6) (Arthrobacter chlorophenolicus).